The primary structure comprises 379 residues: Transcription termination factor Rho (379 aa).

In terms of domain architecture, Rho RNA-BD spans 1–68 (MTDKYGFLRS…KRIFQINGRF (68 aa)). Residues 111–116 (GKGQRG), 123–128 (KTGKTT), and Arg154 contribute to the ATP site.

Belongs to the Rho family. Homohexamer. The homohexamer assembles into an open ring structure.

Facilitates transcription termination by a mechanism that involves Rho binding to the nascent RNA, activation of Rho's RNA-dependent ATPase activity, and release of the mRNA from the DNA template. The polypeptide is Transcription termination factor Rho (Karelsulcia muelleri (strain SMDSEM) (Sulcia muelleri)).